A 370-amino-acid chain; its full sequence is 3-isopropylmalate dehydrogenase (370 aa).

77-90 (GPKWDAVPYDARPE) serves as a coordination point for NAD(+). The substrate site is built by R97, R107, R135, and D226. Mg(2+) contacts are provided by D226, D250, and D254. 290–302 (GSAPDIAGKGLAN) contributes to the NAD(+) binding site.

The protein belongs to the isocitrate and isopropylmalate dehydrogenases family. LeuB type 1 subfamily. In terms of assembly, homodimer. Requires Mg(2+) as cofactor. The cofactor is Mn(2+).

The protein resides in the cytoplasm. The enzyme catalyses (2R,3S)-3-isopropylmalate + NAD(+) = 4-methyl-2-oxopentanoate + CO2 + NADH. It functions in the pathway amino-acid biosynthesis; L-leucine biosynthesis; L-leucine from 3-methyl-2-oxobutanoate: step 3/4. Its function is as follows. Catalyzes the oxidation of 3-carboxy-2-hydroxy-4-methylpentanoate (3-isopropylmalate) to 3-carboxy-4-methyl-2-oxopentanoate. The product decarboxylates to 4-methyl-2 oxopentanoate. This is 3-isopropylmalate dehydrogenase from Rhodopseudomonas palustris (strain HaA2).